Consider the following 213-residue polypeptide: Probable nicotinate-nucleotide adenylyltransferase (213 aa).

The protein belongs to the NadD family.

The enzyme catalyses nicotinate beta-D-ribonucleotide + ATP + H(+) = deamido-NAD(+) + diphosphate. It participates in cofactor biosynthesis; NAD(+) biosynthesis; deamido-NAD(+) from nicotinate D-ribonucleotide: step 1/1. Functionally, catalyzes the reversible adenylation of nicotinate mononucleotide (NaMN) to nicotinic acid adenine dinucleotide (NaAD). The sequence is that of Probable nicotinate-nucleotide adenylyltransferase from Escherichia coli O139:H28 (strain E24377A / ETEC).